A 42-amino-acid chain; its full sequence is Photosystem I reaction center subunit IX (42 aa).

A helical transmembrane segment spans residues 7–27 (YLSTAPVLAALSLGFLAGLLI).

The protein belongs to the PsaJ family.

The protein localises to the plastid. It localises to the chloroplast thylakoid membrane. Its function is as follows. May help in the organization of the PsaE and PsaF subunits. The protein is Photosystem I reaction center subunit IX of Cryptomeria japonica (Japanese cedar).